The sequence spans 78 residues: Large ribosomal subunit protein bL28 (78 aa).

A disordered region spans residues 1–25 (MSRVCQVTGKRPAVGNNRSHAKNAT).

This sequence belongs to the bacterial ribosomal protein bL28 family.

This Vibrio cholerae serotype O1 (strain ATCC 39541 / Classical Ogawa 395 / O395) protein is Large ribosomal subunit protein bL28.